Consider the following 541-residue polypeptide: Protein wntless homolog (541 aa).

At 1 to 15 (MAGAIIENMGTKKLC) the chain is on the cytoplasmic side. Residues 16–36 (IVGGILLVFQIIAFLVGGLIA) form a helical membrane-spanning segment. The Lumenal portion of the chain corresponds to 37–232 (PGPTTAVSYM…GIHQNGGFTK (196 aa)). An interaction with Wnt proteins region spans residues 101-232 (MEMSPWFQFM…GIHQNGGFTK (132 aa)). A helical transmembrane segment spans residues 233 to 253 (VWFAMKTFLTPSIFIIMVWYW). The Cytoplasmic portion of the chain corresponds to 254–268 (RRITMMSRPPVLLEK). The chain crosses the membrane as a helical span at residues 269–289 (VIFALGISMTFINIPVEWFSI). Residues 290–303 (GFDWTWMLLFGDIR) lie on the Lumenal side of the membrane. The helical transmembrane segment at 304–324 (QGIFYAMLLSFWIIFCGEHMM) threads the bilayer. The Cytoplasmic segment spans residues 325–331 (DQHERNH). A helical transmembrane segment spans residues 332–352 (IAGYWKQVGPIAVGSFCLFIF). Residues 353–380 (DMCERGVQLTNPFYSIWTTDIGTELAMA) are Lumenal-facing. A helical membrane pass occupies residues 381-401 (FIIVAGICLCLYFLFLCFMVF). Topologically, residues 402–431 (QVFRNISGKQSSLPAMSKVRRLHYEGLIFR) are cytoplasmic. Residues 432–452 (FKFLMLITLACAAMTVIFFIV) form a helical membrane-spanning segment. Residues 453–471 (SQVTEGHWKWGGVTVQVNS) lie on the Lumenal side of the membrane. Residues 472 to 492 (AFFTGIYGMWNLYVFALMFLY) form a helical membrane-spanning segment. Residues 493 to 541 (APSHKNYGEDQSNGDLGVHSGEELQLTTTITHVDGPTEIYKLTRKEAQE) lie on the Cytoplasmic side of the membrane.

Belongs to the wntless family. As to quaternary structure, interacts with WNT3A. Interacts with WNT1, WNT3 and WNT5A.

The protein resides in the golgi apparatus membrane. The protein localises to the cytoplasmic vesicle membrane. It localises to the cell membrane. Its subcellular location is the endoplasmic reticulum membrane. It is found in the early endosome membrane. Functionally, regulates Wnt proteins sorting and secretion in a feedback regulatory mechanism. This reciprocal interaction plays a key role in the regulation of expression, subcellular location, binding and organelle-specific association of Wnt proteins. Also plays an important role in establishment of the anterior-posterior body axis formation during development. The chain is Protein wntless homolog (WLS) from Pongo abelii (Sumatran orangutan).